A 320-amino-acid polypeptide reads, in one-letter code: Cytochrome f (320 aa).

The signal sequence occupies residues 1-35 (MHTKNLFYSRPQQITQYLSAFLMMVILTRTSISSA). 4 residues coordinate heme: Tyr-36, Cys-56, Cys-59, and His-60. The helical transmembrane segment at 286–306 (VQVLLFFFASIILAQIFLVLK) threads the bilayer.

This sequence belongs to the cytochrome f family. As to quaternary structure, the 4 large subunits of the cytochrome b6-f complex are cytochrome b6, subunit IV (17 kDa polypeptide, petD), cytochrome f and the Rieske protein, while the 4 small subunits are PetG, PetL, PetM and PetN. The complex functions as a dimer. The cofactor is heme.

It localises to the plastid thylakoid membrane. In terms of biological role, component of the cytochrome b6-f complex, which mediates electron transfer between photosystem II (PSII) and photosystem I (PSI), cyclic electron flow around PSI, and state transitions. This is Cytochrome f from Cuscuta obtusiflora (Peruvian dodder).